Reading from the N-terminus, the 373-residue chain is PqqA peptide cyclase (373 aa).

The 221-residue stretch at 7-227 (ILNPVGLLAE…EVYAGVIVID (221 aa)) folds into the Radical SAM core domain. 3 residues coordinate [4Fe-4S] cluster: C21, C25, and C28.

Belongs to the radical SAM superfamily. PqqE family. In terms of assembly, interacts with PqqD. The interaction is necessary for activity of PqqE. [4Fe-4S] cluster is required as a cofactor.

It carries out the reaction [PQQ precursor protein] + S-adenosyl-L-methionine = E-Y cross-linked-[PQQ precursor protein] + 5'-deoxyadenosine + L-methionine + H(+). The protein operates within cofactor biosynthesis; pyrroloquinoline quinone biosynthesis. In terms of biological role, catalyzes the cross-linking of a glutamate residue and a tyrosine residue in the PqqA protein as part of the biosynthesis of pyrroloquinoline quinone (PQQ). In Methylocella silvestris (strain DSM 15510 / CIP 108128 / LMG 27833 / NCIMB 13906 / BL2), this protein is PqqA peptide cyclase.